We begin with the raw amino-acid sequence, 572 residues long: mRNA cap guanine-N(7) methyltransferase (572 aa).

Disordered stretches follow at residues 1 to 75 and 110 to 140; these read MPED…GSRV and EKAI…FPSS. Basic and acidic residues-rich tracts occupy residues 24-39 and 59-69; these read ANDG…RVHD and SADENKDKKYD. Over residues 123 to 140 the composition is skewed to low complexity; that stretch reads TTTTPSSTTSSSSSFPSS. The region spanning 262 to 571 is the mRNA cap 0 methyltransferase domain; the sequence is SPIYKLRNFN…FYVAFVFEKV (310 aa). Residue 271 to 272 participates in mRNA binding; sequence NN. S-adenosyl-L-methionine-binding residues include Lys275, Cys302, Asp324, Asp366, Gln396, and Tyr401.

Belongs to the class I-like SAM-binding methyltransferase superfamily. mRNA cap 0 methyltransferase family.

It localises to the nucleus. The enzyme catalyses a 5'-end (5'-triphosphoguanosine)-ribonucleoside in mRNA + S-adenosyl-L-methionine = a 5'-end (N(7)-methyl 5'-triphosphoguanosine)-ribonucleoside in mRNA + S-adenosyl-L-homocysteine. Its function is as follows. Responsible for methylating the 5'-cap structure of mRNAs. This is mRNA cap guanine-N(7) methyltransferase (ABD1) from Lodderomyces elongisporus (strain ATCC 11503 / CBS 2605 / JCM 1781 / NBRC 1676 / NRRL YB-4239) (Yeast).